The following is a 208-amino-acid chain: Uridine kinase (208 aa).

11–18 (GGTGSGKS) is an ATP binding site.

It belongs to the uridine kinase family.

It localises to the cytoplasm. It catalyses the reaction uridine + ATP = UMP + ADP + H(+). It carries out the reaction cytidine + ATP = CMP + ADP + H(+). Its pathway is pyrimidine metabolism; CTP biosynthesis via salvage pathway; CTP from cytidine: step 1/3. The protein operates within pyrimidine metabolism; UMP biosynthesis via salvage pathway; UMP from uridine: step 1/1. This is Uridine kinase from Clostridium novyi (strain NT).